Here is a 104-residue protein sequence, read N- to C-terminus: Pyrimidine/purine nucleoside phosphorylase (104 aa).

The protein belongs to the nucleoside phosphorylase PpnP family.

The catalysed reaction is a purine D-ribonucleoside + phosphate = a purine nucleobase + alpha-D-ribose 1-phosphate. The enzyme catalyses adenosine + phosphate = alpha-D-ribose 1-phosphate + adenine. It carries out the reaction cytidine + phosphate = cytosine + alpha-D-ribose 1-phosphate. It catalyses the reaction guanosine + phosphate = alpha-D-ribose 1-phosphate + guanine. The catalysed reaction is inosine + phosphate = alpha-D-ribose 1-phosphate + hypoxanthine. The enzyme catalyses thymidine + phosphate = 2-deoxy-alpha-D-ribose 1-phosphate + thymine. It carries out the reaction uridine + phosphate = alpha-D-ribose 1-phosphate + uracil. It catalyses the reaction xanthosine + phosphate = alpha-D-ribose 1-phosphate + xanthine. In terms of biological role, catalyzes the phosphorolysis of diverse nucleosides, yielding D-ribose 1-phosphate and the respective free bases. Can use uridine, adenosine, guanosine, cytidine, thymidine, inosine and xanthosine as substrates. Also catalyzes the reverse reactions. The chain is Pyrimidine/purine nucleoside phosphorylase from Geobacter metallireducens (strain ATCC 53774 / DSM 7210 / GS-15).